We begin with the raw amino-acid sequence, 557 residues long: Formate--tetrahydrofolate ligase (557 aa).

Residue 65–72 participates in ATP binding; that stretch reads TPAGEGKT.

Belongs to the formate--tetrahydrofolate ligase family. In terms of assembly, homotetramer.

It catalyses the reaction (6S)-5,6,7,8-tetrahydrofolate + formate + ATP = (6R)-10-formyltetrahydrofolate + ADP + phosphate. The protein operates within one-carbon metabolism; tetrahydrofolate interconversion. This Methylorubrum extorquens (strain ATCC 14718 / DSM 1338 / JCM 2805 / NCIMB 9133 / AM1) (Methylobacterium extorquens) protein is Formate--tetrahydrofolate ligase (fhs).